Consider the following 203-residue polypeptide: High frequency lysogenization protein HflD homolog (203 aa).

Belongs to the HflD family.

It localises to the cytoplasm. The protein resides in the cell inner membrane. The protein is High frequency lysogenization protein HflD homolog of Vesicomyosocius okutanii subsp. Calyptogena okutanii (strain HA).